Consider the following 86-residue polypeptide: CRISPR-associated endoribonuclease Cas2 (86 aa).

D8 is a Mg(2+) binding site.

This sequence belongs to the CRISPR-associated endoribonuclease Cas2 protein family. In terms of assembly, homodimer, forms a heterotetramer with a Cas1 homodimer. Requires Mg(2+) as cofactor.

In terms of biological role, CRISPR (clustered regularly interspaced short palindromic repeat), is an adaptive immune system that provides protection against mobile genetic elements (viruses, transposable elements and conjugative plasmids). CRISPR clusters contain sequences complementary to antecedent mobile elements and target invading nucleic acids. CRISPR clusters are transcribed and processed into CRISPR RNA (crRNA). Functions as a ssRNA-specific endoribonuclease. Involved in the integration of spacer DNA into the CRISPR cassette. Plasmid targeted by CRISPR locus P1 transform wild-type cells very poorly. This Haloferax volcanii (strain ATCC 29605 / DSM 3757 / JCM 8879 / NBRC 14742 / NCIMB 2012 / VKM B-1768 / DS2) (Halobacterium volcanii) protein is CRISPR-associated endoribonuclease Cas2.